The primary structure comprises 260 residues: Indole-3-glycerol phosphate synthase (260 aa).

Belongs to the TrpC family.

It carries out the reaction 1-(2-carboxyphenylamino)-1-deoxy-D-ribulose 5-phosphate + H(+) = (1S,2R)-1-C-(indol-3-yl)glycerol 3-phosphate + CO2 + H2O. It functions in the pathway amino-acid biosynthesis; L-tryptophan biosynthesis; L-tryptophan from chorismate: step 4/5. The sequence is that of Indole-3-glycerol phosphate synthase from Ruminiclostridium cellulolyticum (strain ATCC 35319 / DSM 5812 / JCM 6584 / H10) (Clostridium cellulolyticum).